The following is a 669-amino-acid chain: DNA ligase (669 aa).

Residues 33-37, 82-83, and glutamate 114 contribute to the NAD(+) site; these read DAEYD and SL. Lysine 116 serves as the catalytic N6-AMP-lysine intermediate. Positions 137, 174, 291, and 315 each coordinate NAD(+). Residues cysteine 409, cysteine 412, cysteine 427, and cysteine 433 each coordinate Zn(2+). The region spanning 593 to 669 is the BRCT domain; the sequence is EIPQPLAGKV…QTEQDLLALL (77 aa).

It belongs to the NAD-dependent DNA ligase family. LigA subfamily. Mg(2+) is required as a cofactor. The cofactor is Mn(2+).

The catalysed reaction is NAD(+) + (deoxyribonucleotide)n-3'-hydroxyl + 5'-phospho-(deoxyribonucleotide)m = (deoxyribonucleotide)n+m + AMP + beta-nicotinamide D-nucleotide.. Functionally, DNA ligase that catalyzes the formation of phosphodiester linkages between 5'-phosphoryl and 3'-hydroxyl groups in double-stranded DNA using NAD as a coenzyme and as the energy source for the reaction. It is essential for DNA replication and repair of damaged DNA. The sequence is that of DNA ligase from Vibrio vulnificus (strain YJ016).